Consider the following 636-residue polypeptide: Chitin synthase VI (636 aa).

4 helical membrane-spanning segments follow: residues 23-43 (LQWF…LFCI), 374-394 (TIRT…TTTA), 399-419 (LPVG…LYFG), and 427-447 (IWFY…YMVY). A disordered region spans residues 595–636 (QRLRLEQRPRTGPSLNARWQNGPQASETSQGRSQVDDVGIAF). Residues 607–627 (PSLNARWQNGPQASETSQGRS) show a composition bias toward polar residues.

The protein belongs to the chitin synthase family. Class VI subfamily. As to expression, moderately expressed during appressorium formation.

The protein localises to the cell membrane. It catalyses the reaction [(1-&gt;4)-N-acetyl-beta-D-glucosaminyl](n) + UDP-N-acetyl-alpha-D-glucosamine = [(1-&gt;4)-N-acetyl-beta-D-glucosaminyl](n+1) + UDP + H(+). Polymerizes chitin, a structural polymer of the cell wall and septum, by transferring the sugar moiety of UDP-GlcNAc to the non-reducing end of the growing chitin polymer. Contributes to the production of conidia but is the only chitine synthase that does not contribute to the ability of fungal conidia to germinate. Involved in fungal stress tolerances. The protein is Chitin synthase VI of Metarhizium acridum (strain CQMa 102).